Reading from the N-terminus, the 341-residue chain is L-threonine 3-dehydrogenase (341 aa).

Cys38 is a Zn(2+) binding site. Residues Thr40 and His43 each act as charge relay system in the active site. The Zn(2+) site is built by His63, Glu64, Cys93, Cys96, Cys99, and Cys107. Residues Ile175, Asp195, Arg200, 262–264 (LGI), and 286–287 (IY) each bind NAD(+).

The protein belongs to the zinc-containing alcohol dehydrogenase family. In terms of assembly, homotetramer. Zn(2+) is required as a cofactor.

The protein localises to the cytoplasm. It catalyses the reaction L-threonine + NAD(+) = (2S)-2-amino-3-oxobutanoate + NADH + H(+). It functions in the pathway amino-acid degradation; L-threonine degradation via oxydo-reductase pathway; glycine from L-threonine: step 1/2. In terms of biological role, catalyzes the NAD(+)-dependent oxidation of L-threonine to 2-amino-3-ketobutyrate. The chain is L-threonine 3-dehydrogenase from Serratia proteamaculans (strain 568).